The chain runs to 732 residues: Catalase-peroxidase (732 aa).

The segment covering 1-10 (MDAKTDDKAG) has biased composition (basic and acidic residues). A disordered region spans residues 1–26 (MDAKTDDKAGKCPVAHGPAPRGNRDW). Positions 95-217 (WHSAGTYRTT…LGAVQMGLIY (123 aa)) form a cross-link, tryptophyl-tyrosyl-methioninium (Trp-Tyr) (with M-243). His-96 serves as the catalytic Proton acceptor. The segment at residues 217–243 (YVNPEGPNGNPDPLGSAKDIRETFARM) is a cross-link (tryptophyl-tyrosyl-methioninium (Tyr-Met) (with W-95)). Residue His-258 participates in heme b binding.

It belongs to the peroxidase family. Peroxidase/catalase subfamily. In terms of assembly, homodimer or homotetramer. Heme b serves as cofactor. Post-translationally, formation of the three residue Trp-Tyr-Met cross-link is important for the catalase, but not the peroxidase activity of the enzyme.

The enzyme catalyses H2O2 + AH2 = A + 2 H2O. It carries out the reaction 2 H2O2 = O2 + 2 H2O. Bifunctional enzyme with both catalase and broad-spectrum peroxidase activity. The chain is Catalase-peroxidase from Rhodopseudomonas palustris (strain BisB18).